The following is a 2971-amino-acid chain: uncharacterized protein (2971 aa).

Positions 929 to 964 (SANFSNGPEESSLSTRLHIQKKRKAKKQRLETRRQK) are disordered. Polar residues predominate over residues 936–945 (PEESSLSTRL). Residues 946-955 (HIQKKRKAKK) are compositionally biased toward basic residues.

Its subcellular location is the plastid. It is found in the chloroplast. This is an uncharacterized protein from Chlamydomonas reinhardtii (Chlamydomonas smithii).